The chain runs to 248 residues: Tetraspanin-17 (248 aa).

The Cytoplasmic portion of the chain corresponds to 1–7 (MSEVRTG). The helical transmembrane segment at 8–28 (FLTMTTIILISIGLTMMGTGL) threads the bilayer. The Extracellular portion of the chain corresponds to 29–44 (YQKTTMSSCIRETSSQ). The helical transmembrane segment at 45 to 65 (FTLLGLLLLLIPQIGLYGICC) threads the bilayer. Residues 66-69 (RSKR) are Cytoplasmic-facing. Residues 70–90 (LFNFFFYGMVVLIIIVSYYSI) form a helical membrane-spanning segment. The Extracellular portion of the chain corresponds to 91-210 (KCSIYNTTFG…ILKAIVHQWK (120 aa)). 3 N-linked (GlcNAc...) asparagine glycosylation sites follow: N96, N109, and N141. Residues 211–231 (YLSMFAYPALVLSCISLAIAW) form a helical membrane-spanning segment. At 232–248 (SLKETIHENEDYRGSYS) the chain is on the cytoplasmic side.

It belongs to the tetraspanin (TM4SF) family.

It is found in the membrane. Functionally, may be involved in the regulation of cell differentiation. The sequence is that of Tetraspanin-17 (TET17) from Arabidopsis thaliana (Mouse-ear cress).